We begin with the raw amino-acid sequence, 133 residues long: Small ribosomal subunit protein uS19 (133 aa).

Belongs to the universal ribosomal protein uS19 family.

Its function is as follows. Protein S19 forms a complex with S13 that binds strongly to the 16S ribosomal RNA. This chain is Small ribosomal subunit protein uS19, found in Thermococcus gammatolerans (strain DSM 15229 / JCM 11827 / EJ3).